The sequence spans 426 residues: G2/mitotic-specific cyclin-A (426 aa).

The span at Met-1–Ile-11 shows a compositional bias: polar residues. The interval Met-1–Val-22 is disordered.

Belongs to the cyclin family. Cyclin AB subfamily.

In terms of biological role, essential for the control of the cell cycle at the G2/M (mitosis) transition. Interacts with the CDC2 and CDK2 protein kinases to form MPF. G2/M cyclins accumulate steadily during G2 and are abruptly destroyed at mitosis. This is G2/mitotic-specific cyclin-A from Patella vulgata (Common limpet).